We begin with the raw amino-acid sequence, 149 residues long: Putative inactive group IIC secretory phospholipase A2 (149 aa).

Residues 1–18 (MKVIAILTLLLFCSPTHS) form the signal peptide. 4 cysteine pairs are disulfide-bonded: Cys-44–Cys-142, Cys-77–Cys-107, Cys-95–Cys-112, and Cys-97–Cys-105. Residues Tyr-45, Gly-47, and Gly-49 each contribute to the Ca(2+) site.

Belongs to the phospholipase A2 family. Ca(2+) serves as cofactor.

Its subcellular location is the secreted. In terms of biological role, inactive phospholipase. In Homo sapiens (Human), this protein is Putative inactive group IIC secretory phospholipase A2 (PLA2G2C).